The sequence spans 356 residues: Cytochrome c oxidase subunit 2 (356 aa).

Positions 1–20 (MVKHWRLILLLALVPLLLSG) are cleaved as a signal peptide. C21 carries N-palmitoyl cysteine lipidation. C21 carries the S-diacylglycerol cysteine lipid modification. Residues 21–47 (CGKPFLSTLKPAGEVADKQYDLTVLST) lie on the Extracellular side of the membrane. The cytochrome c oxidase subunit II stretch occupies residues 21–257 (CGKPFLSTLK…KNYKSTAESD (237 aa)). A helical transmembrane segment spans residues 48–66 (LIMVVVVAVVSVIFFYVIV). The Cytoplasmic segment spans residues 67-87 (RFRRSRVGENTIPKQVEGNKF). Residues 88–106 (LEITWTVIPILLLIILVIP) form a helical membrane-spanning segment. Over 107–356 (VVLYTLELAD…YLKGLKAESK (250 aa)) the chain is Extracellular. Cu cation contacts are provided by H176, C217, C221, and H225. The region spanning 258 to 356 (LAKQGEELFK…YLKGLKAESK (99 aa)) is the Cytochrome c domain. Heme c is bound by residues C271, C274, H275, and M329.

The protein belongs to the cytochrome c oxidase subunit 2 family. It depends on Cu cation as a cofactor. The cofactor is heme c.

The protein resides in the cell membrane. The enzyme catalyses 4 Fe(II)-[cytochrome c] + O2 + 8 H(+)(in) = 4 Fe(III)-[cytochrome c] + 2 H2O + 4 H(+)(out). Its function is as follows. Subunits I and II form the functional core of the enzyme complex. Electrons originating in cytochrome c are transferred via heme a and Cu(A) to the binuclear center formed by heme a3 and Cu(B). The sequence is that of Cytochrome c oxidase subunit 2 (ctaC) from Bacillus subtilis (strain 168).